The sequence spans 272 residues: MPKITKIEVQKKNKERFNLFLDEQFEMGIDIDTLVKFNLKKGQQLEAADMAEIQKYDHYRIGLNKAIQYLSYKKRTEKEVIQYLQKEEISEQAISEVIEYCYREKLIDHQDYAESLKNTMIRTTDKGPKIYQQKLYQLGIEPNIIEIFTELYREQQELDDIIQIAEKISKTKKGPQNKVKEKVMQSLIQKGFEMETIHAVLNEMDFTQDEAVLDDLLQRDLEKIYNKNRKKYTQQKLISKTIEGLMRKGYKYDKIKAKLEESGIADGTEEIE.

This sequence belongs to the RecX family.

Its subcellular location is the cytoplasm. Functionally, modulates RecA activity. This Staphylococcus aureus (strain Newman) protein is Regulatory protein RecX.